We begin with the raw amino-acid sequence, 314 residues long: DNA-directed RNA polymerase subunit alpha (314 aa).

The alpha N-terminal domain (alpha-NTD) stretch occupies residues Met1–Thr228. Residues Asn241 to Ser314 form an alpha C-terminal domain (alpha-CTD) region.

Belongs to the RNA polymerase alpha chain family. As to quaternary structure, in cyanobacteria the RNAP catalytic core is composed of 2 alpha, 1 beta, 1 beta', 1 gamma and 1 omega subunit. When a sigma factor is associated with the core the holoenzyme is formed, which can initiate transcription.

It carries out the reaction RNA(n) + a ribonucleoside 5'-triphosphate = RNA(n+1) + diphosphate. Functionally, DNA-dependent RNA polymerase catalyzes the transcription of DNA into RNA using the four ribonucleoside triphosphates as substrates. The protein is DNA-directed RNA polymerase subunit alpha of Gloeobacter violaceus (strain ATCC 29082 / PCC 7421).